The following is a 380-amino-acid chain: Putative zinc finger protein C02F5.12 (380 aa).

Positions Asn137 to Ala187 are disordered. 2 stretches are compositionally biased toward polar residues: residues Gly142–Ser152 and Asp171–Ala187. The C2H2-type zinc finger occupies Ile271–His294.

The protein localises to the nucleus. The chain is Putative zinc finger protein C02F5.12 from Caenorhabditis elegans.